The following is a 635-amino-acid chain: MHGLLLAAGLLSLPLHVLAHPQPSTSTSLAGRAGAVDLNEFRVAHRSSYTSHDEMKKLPSIASFRQGTYLEVATELVKQTMPNMEFRLVDDHYVGDSGIGHVRFRQTMHGIDIDNSDFNVNVGKNGKVLSHGNSFYTGPAPASNPMVKRDFIDPMQALNGVRKALNLPVKADGAHVENMSEHKVMFKGTSGALSDPTAKLCYMAKEDGSLALTWRVETDIGDNWLLSYMDAKESSKVHNVVDYVAHATFQVYKWGLADPTEGKRDILTNPWNLKTSPLTWLADGKTNFTATRGNNAIAQYNPDGGNDYENNYRPSPKNLKFEYPYSPDMNPPKTYIDASVTQLFYTSNVCHDLYYMLGFNEKAGNFQVNNRGQGGKGNDYVILNAQDGSGTNNANFATPPDGQPGRMRAYIWTRANPPRDASFEAGTIIHEYTHGLSNRLCGGPANSRCLNALESGGMGEGWGDFYATAVRLKPNDTRKTNYVKGGWVNNSPKGVRMYPYSTDMNVNPLVYTSNNKLNEVHAIGTVWCTMLYEVLWNLIDKHGKNDGPVPVFENGVPNDGKYLAMKLVMDGMAIQPCNPNFVQARDAILDADMNLTKGANKCEIWKGFAKRGLGVGAKFDPKNRTGSNQVPNECK.

A signal peptide spans 1 to 19 (MHGLLLAAGLLSLPLHVLA). The propeptide occupies 20-246 (HPQPSTSTSL…VHNVVDYVAH (227 aa)). Residue Asn287 is glycosylated (N-linked (GlcNAc...) asparagine). His430 contacts Zn(2+). The active site involves Glu431. Zn(2+) is bound at residue His434. N-linked (GlcNAc...) asparagine glycosylation is found at Asn475, Asn594, and Asn623.

Belongs to the peptidase M36 family. It depends on Zn(2+) as a cofactor.

The protein resides in the secreted. Secreted metalloproteinase probably acting as a virulence factor. The polypeptide is Extracellular metalloproteinase 1 (MEP1) (Arthroderma benhamiae (Trichophyton mentagrophytes)).